Consider the following 537-residue polypeptide: CWF19-like protein 1 (537 aa).

Residues 297–323 (KQGRKRPSTGRDTRPPHAKQPRKPPQP) form a disordered region.

Belongs to the CWF19 family.

The polypeptide is CWF19-like protein 1 (Cwf19l1) (Mus musculus (Mouse)).